We begin with the raw amino-acid sequence, 369 residues long: Type 2 DNA topoisomerase 6 subunit A (369 aa).

Positions Q11–A149 constitute a Topo IIA-type catalytic domain. The active-site O-(5'-phospho-DNA)-tyrosine intermediate is Y106. Residues E202 and D254 each coordinate Mg(2+).

This sequence belongs to the TOP6A family. Homodimer. Heterotetramer of two Top6A and two Top6B chains. Requires Mg(2+) as cofactor.

It catalyses the reaction ATP-dependent breakage, passage and rejoining of double-stranded DNA.. Its function is as follows. Relaxes both positive and negative superturns and exhibits a strong decatenase activity. In Methanosarcina barkeri (strain Fusaro / DSM 804), this protein is Type 2 DNA topoisomerase 6 subunit A.